Here is a 372-residue protein sequence, read N- to C-terminus: MARAHNATLESIQYARGTLRLLDQRKLPLETVFDEILTVDDIWTAIKEMRVRGAPAIAVSAALAIAVAAGNELKKKDGACNSVDGTRRFLLESCDTVMTARPTAVNLSKTLIQLKRDIADVTANTAGGLVEACAVLAEKIYAEDVACNEGIMRHGAAHLTQLVKKSKVSVLTICNTGALATSRYGTALGVVRQLFYEGKLEQVYACETRPWNQGARLTVYECVQENIPCTLICDSAVSALMGSRPIDAVIVGADRICRNGDTANKIGTCNLAVAAAHYGVPFFVAAPSTTLDPMTADGESVVIEERETMELTHSMATQQRVVAEGPSLRIWNPVFDITPAALVTGGIITERGVLQPSATAPFFDITRIVSAS.

D254 (proton donor) is an active-site residue.

It belongs to the eIF-2B alpha/beta/delta subunits family. MtnA subfamily.

The protein localises to the cytoplasm. It localises to the nucleus. The catalysed reaction is 5-(methylsulfanyl)-alpha-D-ribose 1-phosphate = 5-(methylsulfanyl)-D-ribulose 1-phosphate. It participates in amino-acid biosynthesis; L-methionine biosynthesis via salvage pathway; L-methionine from S-methyl-5-thio-alpha-D-ribose 1-phosphate: step 1/6. Functionally, catalyzes the interconversion of methylthioribose-1-phosphate (MTR-1-P) into methylthioribulose-1-phosphate (MTRu-1-P). The sequence is that of Methylthioribose-1-phosphate isomerase 2 from Trypanosoma cruzi (strain CL Brener).